We begin with the raw amino-acid sequence, 95 residues long: Small ribosomal subunit protein uS19 (95 aa).

The protein belongs to the universal ribosomal protein uS19 family.

Functionally, protein S19 forms a complex with S13 that binds strongly to the 16S ribosomal RNA. The protein is Small ribosomal subunit protein uS19 of Thermosipho melanesiensis (strain DSM 12029 / CIP 104789 / BI429).